A 274-amino-acid chain; its full sequence is Nitrogenase iron protein (274 aa).

8–15 contributes to the ATP binding site; the sequence is GKGGIGKS. Cys94 is a binding site for [4Fe-4S] cluster. Arg97 carries the post-translational modification ADP-ribosylarginine; by dinitrogenase reductase ADP-ribosyltransferase. Cys131 serves as a coordination point for [4Fe-4S] cluster.

Belongs to the NifH/BchL/ChlL family. Homodimer. Requires [4Fe-4S] cluster as cofactor. The reversible ADP-ribosylation of Arg-97 inactivates the nitrogenase reductase and regulates nitrogenase activity.

The catalysed reaction is N2 + 8 reduced [2Fe-2S]-[ferredoxin] + 16 ATP + 16 H2O = H2 + 8 oxidized [2Fe-2S]-[ferredoxin] + 2 NH4(+) + 16 ADP + 16 phosphate + 6 H(+). Its function is as follows. The key enzymatic reactions in nitrogen fixation are catalyzed by the nitrogenase complex, which has 2 components: the iron protein and the molybdenum-iron protein. The protein is Nitrogenase iron protein of Solidesulfovibrio magneticus (strain ATCC 700980 / DSM 13731 / RS-1) (Desulfovibrio magneticus).